Consider the following 337-residue polypeptide: MTLLDETASAQFGDDVAPTEEWAAEVRRLARQRGATLLAHNYQLPAIQDVADHVGDSLALSRIAAEAPEDTIVFCGVHFMAETAKILSPDKTVLIPDARAGCSLADSITADQLREWKAEYPGAVVVSYVNTTAAVKAETDICCTSSNAVDVVASIPADREVLFCPDQFLGAHVRRVTGRTNMQIWAGECHVHAGINGDELADQARAHPDAELFVHPECGCATSALYLAGEGAFPADRVKILSTGGMLDAARESRASQVLVATEVGMLHQLRRAAPEIDFQAVNDRASCRYMKMITPAALLRCLTYGTDEVDVDHETARLARRSVQRMIEIGQPGGGE.

His40 and Ser57 together coordinate iminosuccinate. [4Fe-4S] cluster is bound at residue Cys102. Iminosuccinate is bound by residues 128 to 130 (YVN) and Ser145. Cys189 is a binding site for [4Fe-4S] cluster. Residues 215–217 (HPE) and Thr243 contribute to the iminosuccinate site. Residue Cys288 participates in [4Fe-4S] cluster binding.

It belongs to the quinolinate synthase family. Type 2 subfamily. It depends on [4Fe-4S] cluster as a cofactor.

Its subcellular location is the cytoplasm. It catalyses the reaction iminosuccinate + dihydroxyacetone phosphate = quinolinate + phosphate + 2 H2O + H(+). The protein operates within cofactor biosynthesis; NAD(+) biosynthesis; quinolinate from iminoaspartate: step 1/1. Its function is as follows. Catalyzes the condensation of iminoaspartate with dihydroxyacetone phosphate to form quinolinate. The sequence is that of Quinolinate synthase from Mycobacterium sp. (strain JLS).